Here is a 677-residue protein sequence, read N- to C-terminus: Beta-galactosidase BgaA (677 aa).

A substrate-binding site is contributed by Arg-112. Cys-116 serves as a coordination point for Zn(2+). Asn-150 serves as a coordination point for substrate. Glu-151 (proton donor) is an active-site residue. Zn(2+)-binding residues include Cys-156, Cys-158, and Cys-161. Glu-309 acts as the Nucleophile in catalysis. Substrate is bound by residues Trp-317 and 357–360 (EKYH).

This sequence belongs to the glycosyl hydrolase 42 family. Dimer.

It carries out the reaction Hydrolysis of terminal non-reducing beta-D-galactose residues in beta-D-galactosides.. With respect to regulation, no activity is lost during treatment with 20 or 100 mM EDTA in Z buffer for 3 hours at 0 degrees Celsius, nor is activity greatly stimulated by the addition of cations. Inhibited by 1 mM zinc and 1 mM copper, the levels of activity decrease to 10% of the untreated control. Nickel, cobalt and manganese at concentrations of 10 mM decrease enzyme activity to either 40% (for nickel and cobalt) or 60% (for manganese) of the activity in untreated controls. No change in enzyme activity in the presence of calcium and magnesium at concentrations up to 50 mM. EDTA-treated enzyme exhibits a slight increase in relative specific activity when it is assayed in the presence of 50 mM NaCl or 50 mM KCl, it does not exhibit enhanced activity at concentrations greater than 250 mM. Maintains between 20 and 40% of activity in the presence of 4 M NaCl or 4 M KCl, and it is more active in the presence of KCl than in the presence of NaCl. Retains 50% of activity in the presence of 3 M KCl or 2.5 M NaCl. Hydrolyzes o-nitrophenyl-beta-D-galactopyranoside (ONPG), p-nitrophenyl-beta-D-galactopyranoside (PNPG), 5-bromo-4-chloro-3-indoyl-beta-D-galactosde (X-gal), o-nitrophenyl-beta-D-fucopyranoside (ONPF) and p-nitrophenyl-beta-D-fucopyranoside (PNPF) with greatest activity towards ONPG and PNPG and low levels of activity with ONPF and PNPF. Detectable, but very low levels of activity towards p-nitrophenyl-beta-lactose (PNPL), p-nitrophenyl-beta-cellobiose (PNPC), p-nitrophenyl-alpha-galactopyranoside (PNP-alpha-G), and p-nitrophenyl-beta-xylopyranoside (PNPX). In Planococcus sp. (strain 'SOS Orange'), this protein is Beta-galactosidase BgaA.